The chain runs to 217 residues: 3-oxoadipate CoA-transferase subunit B (217 aa).

The active site involves glutamate 50.

It belongs to the 3-oxoacid CoA-transferase subunit B family. Heterodimer.

It catalyses the reaction 3-oxoadipate + succinyl-CoA = 3-oxoadipyl-CoA + succinate. It participates in aromatic compound metabolism; beta-ketoadipate pathway; acetyl-CoA and succinyl-CoA from 3-oxoadipate: step 1/2. The polypeptide is 3-oxoadipate CoA-transferase subunit B (pcaJ) (Acinetobacter baylyi (strain ATCC 33305 / BD413 / ADP1)).